Here is a 1377-residue protein sequence, read N- to C-terminus: DNA-directed RNA polymerase subunit beta' (1377 aa).

Positions 60, 62, 75, and 78 each coordinate Zn(2+). Mg(2+) is bound by residues aspartate 449, aspartate 451, and aspartate 453. Residues cysteine 777, cysteine 851, cysteine 858, and cysteine 861 each coordinate Zn(2+).

It belongs to the RNA polymerase beta' chain family. The RNAP catalytic core consists of 2 alpha, 1 beta, 1 beta' and 1 omega subunit. When a sigma factor is associated with the core the holoenzyme is formed, which can initiate transcription. Mg(2+) serves as cofactor. Zn(2+) is required as a cofactor.

The enzyme catalyses RNA(n) + a ribonucleoside 5'-triphosphate = RNA(n+1) + diphosphate. DNA-dependent RNA polymerase catalyzes the transcription of DNA into RNA using the four ribonucleoside triphosphates as substrates. The chain is DNA-directed RNA polymerase subunit beta' from Borrelia recurrentis (strain A1).